A 193-amino-acid chain; its full sequence is ATP-dependent Clp protease proteolytic subunit (193 aa).

The active-site Nucleophile is the S98. Residue H123 is part of the active site.

It belongs to the peptidase S14 family. Fourteen ClpP subunits assemble into 2 heptameric rings which stack back to back to give a disk-like structure with a central cavity, resembling the structure of eukaryotic proteasomes.

Its subcellular location is the cytoplasm. It catalyses the reaction Hydrolysis of proteins to small peptides in the presence of ATP and magnesium. alpha-casein is the usual test substrate. In the absence of ATP, only oligopeptides shorter than five residues are hydrolyzed (such as succinyl-Leu-Tyr-|-NHMec, and Leu-Tyr-Leu-|-Tyr-Trp, in which cleavage of the -Tyr-|-Leu- and -Tyr-|-Trp bonds also occurs).. Its function is as follows. Cleaves peptides in various proteins in a process that requires ATP hydrolysis. Has a chymotrypsin-like activity. Plays a major role in the degradation of misfolded proteins. This chain is ATP-dependent Clp protease proteolytic subunit, found in Haemophilus influenzae (strain 86-028NP).